A 47-amino-acid chain; its full sequence is Large ribosomal subunit protein bL36B (47 aa).

It belongs to the bacterial ribosomal protein bL36 family.

The chain is Large ribosomal subunit protein bL36B from Pectobacterium atrosepticum (strain SCRI 1043 / ATCC BAA-672) (Erwinia carotovora subsp. atroseptica).